The sequence spans 396 residues: DNA polymerase IV (396 aa).

Positions 5-192 (IFHVDVNSAF…LPVGELFMVG (188 aa)) constitute a UmuC domain. Residues Asp9 and Asp111 each contribute to the Mg(2+) site. Residue Glu112 is part of the active site.

Belongs to the DNA polymerase type-Y family. As to quaternary structure, monomer. The cofactor is Mg(2+).

It is found in the cytoplasm. It catalyses the reaction DNA(n) + a 2'-deoxyribonucleoside 5'-triphosphate = DNA(n+1) + diphosphate. In terms of biological role, poorly processive, error-prone DNA polymerase involved in untargeted mutagenesis. Copies undamaged DNA at stalled replication forks, which arise in vivo from mismatched or misaligned primer ends. These misaligned primers can be extended by PolIV. Exhibits no 3'-5' exonuclease (proofreading) activity. May be involved in translesional synthesis, in conjunction with the beta clamp from PolIII. The protein is DNA polymerase IV of Clostridium acetobutylicum (strain ATCC 824 / DSM 792 / JCM 1419 / IAM 19013 / LMG 5710 / NBRC 13948 / NRRL B-527 / VKM B-1787 / 2291 / W).